Reading from the N-terminus, the 461-residue chain is MAQVLTQFDTIAAISTPIGEGGISIVRLSGEDAVAIANKLFKGADLTQVPSHTIHYGHIVDPKTKDVVDETMVSVLRAPKTFTREDMVEINCHGGMIVTNDILQLLLANGARMADPGEFTKRAFMNGRIDLTQAESVMDIVRAKTDKSRQVAMTQLAGGLLDKIRTMRQELLDTMAHEEVNIDYPEYDMDDLTSQEMKKKAEEVSKQIDQLLKTAQEGKIIRNGLATAIVGRPNVGKSSLLNYLTQDDKAIVTDIAGTTRDTLEEYVSVKGVPLKLIDTAGIHHTEDKVEKIGVERSKKAIAEADLVLLLLDASQDLTDEDKNLLNLTANKKRIIILNKQDLGTKISQEMIREITDNPIIVTSILKQENMAALENAIEQLFFSGIENSQNQILVTNQRQAGLLAKAKQSLEDVVNGIDDAMPLDLVQIDLKNAWDTLGEITGESAPDELITQLFSQFCLGK.

Residues Arg-27, Glu-89, and Arg-128 each contribute to the (6S)-5-formyl-5,6,7,8-tetrahydrofolate site. The 159-residue stretch at 224-382 folds into the TrmE-type G domain; that stretch reads GLATAIVGRP…LENAIEQLFF (159 aa). Asn-234 is a binding site for K(+). Residues 234 to 239, 253 to 259, and 278 to 281 contribute to the GTP site; these read NVGKSS, TDIAGTT, and DTAG. Position 238 (Ser-238) interacts with Mg(2+). Thr-253, Ile-255, and Thr-258 together coordinate K(+). Thr-259 lines the Mg(2+) pocket. Lys-461 lines the (6S)-5-formyl-5,6,7,8-tetrahydrofolate pocket.

This sequence belongs to the TRAFAC class TrmE-Era-EngA-EngB-Septin-like GTPase superfamily. TrmE GTPase family. In terms of assembly, homodimer. Heterotetramer of two MnmE and two MnmG subunits. K(+) serves as cofactor.

The protein localises to the cytoplasm. In terms of biological role, exhibits a very high intrinsic GTPase hydrolysis rate. Involved in the addition of a carboxymethylaminomethyl (cmnm) group at the wobble position (U34) of certain tRNAs, forming tRNA-cmnm(5)s(2)U34. The polypeptide is tRNA modification GTPase MnmE (Lactobacillus johnsonii (strain CNCM I-12250 / La1 / NCC 533)).